Here is a 151-residue protein sequence, read N- to C-terminus: Transcriptional regulator SyrB (151 aa).

Residues 1 to 61 (MADESNTGPV…RYSEQERNDK (61 aa)) are disordered. Positions 33–48 (PQKAAAEPAQPKAPAA) are enriched in low complexity. A compositionally biased stretch (basic and acidic residues) spans 52–61 (RYSEQERNDK).

It belongs to the SyrB family.

Its function is as follows. Responsible for the repression of SyrM activity. The polypeptide is Transcriptional regulator SyrB (syrB) (Rhizobium meliloti (strain 1021) (Ensifer meliloti)).